We begin with the raw amino-acid sequence, 178 residues long: Signaling threshold-regulating transmembrane adapter 1 (178 aa).

Residues 1 to 23 lie on the Extracellular side of the membrane; it reads MSRENNCTTADLAWGIPSITQAW. Asn6 carries N-linked (GlcNAc...) asparagine glycosylation. The chain crosses the membrane as a helical; Signal-anchor for type III membrane protein span at residues 24–44; sequence GLWALFGVVTMLLLISLAALL. The Cytoplasmic portion of the chain corresponds to 45–178; the sequence is SQWTRGRRRT…AYANSQPAPS (134 aa). Phosphoserine occurs at positions 62 and 65. Tyr72 is subject to Phosphotyrosine. Residues 72–75 are interaction with GRB2; that stretch reads YGNL. The segment at 81–102 is disordered; the sequence is GRLSEESRSEEQDPSSGGLARG. Phosphoserine is present on residues Ser84, Ser87, and Ser89. Tyr109 is modified (phosphotyrosine). At Thr126 the chain carries Phosphothreonine. Residues 128–133 are interaction with PTPN11; the sequence is IKYCEV. Phosphotyrosine is present on residues Tyr130 and Tyr151. Residues 151 to 154 are interaction with CSK; the sequence is YASV. Residue Ser164 is modified to Phosphoserine. A Phosphotyrosine modification is found at Tyr170. The interval 170–173 is interaction with GRB2; that stretch reads YANS.

In terms of assembly, homodimer; disulfide-linked. When phosphorylated, interacts with PTPN11/SHP2, GRB2 and CSK. In terms of processing, phosphorylated on tyrosines upon TCR activation; which promotes recruitment of PTPN11, GRB2 and CSK. Lymph node, spleen and thymus.

It localises to the cell membrane. Functionally, negatively regulates T-cell antigen receptor (TCR)-mediated signaling. Involved in positive selection of T-cells. This Rattus norvegicus (Rat) protein is Signaling threshold-regulating transmembrane adapter 1 (Sit1).